The following is a 202-amino-acid chain: Urease accessory protein UreG (202 aa).

13–20 (GPVGAGKT) is a binding site for GTP.

It belongs to the SIMIBI class G3E GTPase family. UreG subfamily. Homodimer. UreD, UreF and UreG form a complex that acts as a GTP-hydrolysis-dependent molecular chaperone, activating the urease apoprotein by helping to assemble the nickel containing metallocenter of UreC. The UreE protein probably delivers the nickel.

It localises to the cytoplasm. In terms of biological role, facilitates the functional incorporation of the urease nickel metallocenter. This process requires GTP hydrolysis, probably effectuated by UreG. This Dinoroseobacter shibae (strain DSM 16493 / NCIMB 14021 / DFL 12) protein is Urease accessory protein UreG.